Consider the following 388-residue polypeptide: Dipeptidase verJ (388 aa).

Zn(2+) contacts are provided by H29, D31, and E142. H169, R243, and D300 together coordinate substrate.

Belongs to the metallo-dependent hydrolases superfamily. Peptidase M19 family. Zn(2+) is required as a cofactor.

The catalysed reaction is an L-aminoacyl-L-amino acid + H2O = 2 an L-alpha-amino acid. It functions in the pathway mycotoxin biosynthesis. Functionally, dipeptidase; part of the gene cluster that mediates the biosynthesis of 11'-deoxyverticillin A, one of the dimeric epipolythiodioxopiperazines (ETPs) from the verticillin family that act as mycotoxins. 11'-deoxyverticillin A is required for normal conidiation. The nonribosomal peptide synthetase verP is speculated to be responsible for condensation of amino acids to form the carbon skeleton of verticillin, whereas the cluster-specific tailoring enzymes are involved in further modifications leading to the production of 11'-deoxyverticillin A. This chain is Dipeptidase verJ, found in Clonostachys rogersoniana.